The primary structure comprises 320 residues: Ribose-phosphate pyrophosphokinase 1 (320 aa).

Residues 39–41 and 98–99 contribute to the ATP site; these read DGE and RQ. 2 residues coordinate Mg(2+): His-132 and Asp-173. Residue Lys-196 is part of the active site. D-ribose 5-phosphate-binding positions include Arg-198, Asp-224, and 228–232; that span reads DTAGT.

Belongs to the ribose-phosphate pyrophosphokinase family. Class I subfamily. Homohexamer. Mg(2+) is required as a cofactor.

It is found in the cytoplasm. It catalyses the reaction D-ribose 5-phosphate + ATP = 5-phospho-alpha-D-ribose 1-diphosphate + AMP + H(+). Its pathway is metabolic intermediate biosynthesis; 5-phospho-alpha-D-ribose 1-diphosphate biosynthesis; 5-phospho-alpha-D-ribose 1-diphosphate from D-ribose 5-phosphate (route I): step 1/1. Functionally, involved in the biosynthesis of the central metabolite phospho-alpha-D-ribosyl-1-pyrophosphate (PRPP) via the transfer of pyrophosphoryl group from ATP to 1-hydroxyl of ribose-5-phosphate (Rib-5-P). The polypeptide is Ribose-phosphate pyrophosphokinase 1 (Streptococcus pyogenes serotype M1).